A 304-amino-acid chain; its full sequence is GS homeobox 2 (304 aa).

The tract at residues 116-151 (AQFCPRVNHAHHHHHPPQHHHHHHQPQQPGSAAAAA) is disordered. Basic residues predominate over residues 123-140 (NHAHHHHHPPQHHHHHHQ). A compositionally biased stretch (low complexity) spans 141–151 (PQQPGSAAAAA). The segment at residues 202–261 (GKRMRTAFTSTQLLELEREFSSNMYLSRLRRIEIATYLNLSEKQVKIWFQNRRVKHKKEG) is a DNA-binding region (homeobox). Residues 283-304 (RSEDEDSLSPASANDDKEISPL) form a disordered region.

The protein belongs to the Antp homeobox family.

The protein localises to the nucleus. The protein resides in the cytoplasm. Transcription factor that binds 5'-CNAATTAG-3' DNA sequence and regulates the expression of numerous genes including genes important for brain development. During telencephalic development, causes ventralization of pallial progenitors and, depending on the developmental stage, specifies different neuronal fates. At early stages, necessary and sufficient to correctly specify the ventral lateral ganglionic eminence (LGE) and its major derivatives, the striatal projection neurons. At later stages, may specify LGE progenitors toward dorsal LGE fates, including olfactory bulb interneurons. This is GS homeobox 2 (GSX2) from Homo sapiens (Human).